The sequence spans 74 residues: Anionic peptide clone 9 (74 aa).

The first 24 residues, 1–24, serve as a signal peptide directing secretion; it reads MVSKSLIVLLLVSVLVSTFFTTEA.

Belongs to the non-disulfide-bridged peptide (NDBP) superfamily. Long chain multifunctional peptide (group 2) family. As to expression, expressed by the venom gland.

The protein resides in the secreted. Functionally, may be an antimicrobial peptide. This chain is Anionic peptide clone 9, found in Tityus costatus (Brazilian scorpion).